The sequence spans 196 residues: ATP-dependent Clp protease proteolytic subunit (196 aa).

Serine 101 functions as the Nucleophile in the catalytic mechanism. The active site involves histidine 126.

Belongs to the peptidase S14 family. As to quaternary structure, component of the chloroplastic Clp protease core complex.

It localises to the plastid. The protein resides in the chloroplast stroma. The enzyme catalyses Hydrolysis of proteins to small peptides in the presence of ATP and magnesium. alpha-casein is the usual test substrate. In the absence of ATP, only oligopeptides shorter than five residues are hydrolyzed (such as succinyl-Leu-Tyr-|-NHMec, and Leu-Tyr-Leu-|-Tyr-Trp, in which cleavage of the -Tyr-|-Leu- and -Tyr-|-Trp bonds also occurs).. In terms of biological role, cleaves peptides in various proteins in a process that requires ATP hydrolysis. Has a chymotrypsin-like activity. Plays a major role in the degradation of misfolded proteins. This Lactuca sativa (Garden lettuce) protein is ATP-dependent Clp protease proteolytic subunit.